The following is a 298-amino-acid chain: UDP-3-O-acyl-N-acetylglucosamine deacetylase (298 aa).

Positions 75, 232, and 236 each coordinate Zn(2+). His-259 (proton donor) is an active-site residue.

The protein belongs to the LpxC family. Zn(2+) serves as cofactor.

It carries out the reaction a UDP-3-O-[(3R)-3-hydroxyacyl]-N-acetyl-alpha-D-glucosamine + H2O = a UDP-3-O-[(3R)-3-hydroxyacyl]-alpha-D-glucosamine + acetate. It functions in the pathway glycolipid biosynthesis; lipid IV(A) biosynthesis; lipid IV(A) from (3R)-3-hydroxytetradecanoyl-[acyl-carrier-protein] and UDP-N-acetyl-alpha-D-glucosamine: step 2/6. Functionally, catalyzes the hydrolysis of UDP-3-O-myristoyl-N-acetylglucosamine to form UDP-3-O-myristoylglucosamine and acetate, the committed step in lipid A biosynthesis. The polypeptide is UDP-3-O-acyl-N-acetylglucosamine deacetylase (Wolinella succinogenes (strain ATCC 29543 / DSM 1740 / CCUG 13145 / JCM 31913 / LMG 7466 / NCTC 11488 / FDC 602W) (Vibrio succinogenes)).